We begin with the raw amino-acid sequence, 107 residues long: U1-lycotoxin-Ls1h (107 aa).

Residues 1–20 (MMKVLVVVALLVTLISYSSS) form the signal peptide. Residues 21 to 41 (EGIDDLEADELLSLMANEQTR) constitute a propeptide that is removed on maturation. 3 disulfide bridges follow: cysteine 44/cysteine 59, cysteine 51/cysteine 68, and cysteine 70/cysteine 84.

This sequence belongs to the neurotoxin 19 (CSTX) family. 04 (U1-Lctx) subfamily. Expressed by the venom gland.

The protein localises to the secreted. In Lycosa singoriensis (Wolf spider), this protein is U1-lycotoxin-Ls1h.